Reading from the N-terminus, the 239-residue chain is Gamma-lactamase MBL2 (239 aa).

Zn(2+) contacts are provided by His56, His58, Asp60, His61, His141, and Asp165.

The protein belongs to the metallo-beta-lactamase superfamily.

Functionally, gamma-lactamase; part of the Fusarium detoxification of benzoxazolinone cluster 2 (FDB2) involved in the degradation of benzoxazolinones produced by the host plant. Maize, wheat, and rye produce the 2 benzoxazinone phytoanticipins 2,4-dihy-droxy-7-methoxy-1,4-benzoxazin-3-one (DIMBOA) and 2,4-dihydroxy-1,4-benzoxazin-3-one (DIBOA) that, due to their inherent instability once released, spontaneously degrade to the more stable corresponding benzoxazolinones, 6-methoxy-2-benzoxazolinone (MBOA) and 2-benzoxazolinone (BOA), respectively. The first step in the detoxification of benzoxazolinones involves the hydrolysis of the cyclic ester bond of benzoxazolinones by the FDB1 cluster gamma-lactamase MBL1 to aminophenols. MBL1 is able to convert BOA into 2-aminophenol (2-AP), as well as MBOA into 5-methoxy-2-aminophenol (2-AMP). The FDB2 cluster N-malonyltransferase FDB2/NAT1 then metabolizes aminophenols via N-malonylation to non-toxic malonamic acids. FDB2/NAT1 converts 2-AP into N-(2-hydroxyphenyl) malonamic acid (HPMA) and 2-AMP into N-(2-hydroxy-4-methoxyphenyl) malonamic acid (HMPMA). The duplicated dienlactone hydrolases DLH1 and DLH2 may provide redundant function for hydrolyzing the lactone moiety in the BOA molecule. The roles of the amidases and other enzymes encoded by the 2 FDB clusters have not been identified so far. This is Gamma-lactamase MBL2 from Gibberella moniliformis (strain M3125 / FGSC 7600) (Maize ear and stalk rot fungus).